Consider the following 152-residue polypeptide: Nucleoside diphosphate kinase (152 aa).

ATP-binding residues include lysine 11, phenylalanine 59, arginine 87, threonine 93, arginine 104, and asparagine 114. The active-site Pros-phosphohistidine intermediate is histidine 117.

The protein belongs to the NDK family. In terms of assembly, homotetramer. It depends on Mg(2+) as a cofactor.

It localises to the cytoplasm. The enzyme catalyses a 2'-deoxyribonucleoside 5'-diphosphate + ATP = a 2'-deoxyribonucleoside 5'-triphosphate + ADP. It carries out the reaction a ribonucleoside 5'-diphosphate + ATP = a ribonucleoside 5'-triphosphate + ADP. Major role in the synthesis of nucleoside triphosphates other than ATP. The ATP gamma phosphate is transferred to the NDP beta phosphate via a ping-pong mechanism, using a phosphorylated active-site intermediate. This is Nucleoside diphosphate kinase from Prochlorococcus marinus subsp. pastoris (strain CCMP1986 / NIES-2087 / MED4).